The primary structure comprises 278 residues: S-formylglutathione hydrolase YeiG (278 aa).

Active-site charge relay system residues include Ser145, Asp223, and His256.

It belongs to the esterase D family.

It catalyses the reaction S-formylglutathione + H2O = formate + glutathione + H(+). Its function is as follows. Serine hydrolase involved in the detoxification of formaldehyde. Hydrolyzes S-formylglutathione to glutathione and formate. This chain is S-formylglutathione hydrolase YeiG (yeiG), found in Escherichia coli O6:K15:H31 (strain 536 / UPEC).